Consider the following 539-residue polypeptide: Tripartite motif-containing protein 26 (539 aa).

The segment at 16 to 57 (CSICLDYLRDPVTIDCGHVFCRSCTTDVRPISGSRPVCPLCK) adopts an RING-type zinc-finger fold. A B box-type zinc finger spans residues 97–138 (QDAKLCERHREKLHYYCEDDGKLLCVMCRESREHRPHTAVLM). Zn(2+)-binding residues include C102, H105, C124, and H130. The stretch at 188–227 (IVAEFEQGHQFLREREEHLLEQLAKLEQELTEGREKFKSR) forms a coiled coil. Positions 295 to 539 (RGLREFQGKL…WPGTRLLLRP (245 aa)) constitute a B30.2/SPRY domain. The tract at residues 376 to 437 (REGWSEDEEE…EEEEEVLESC (62 aa)) is disordered. Positions 380 to 434 (SEDEEEGDEEEEGEEEEEEEEAGYGDGYDDWETDEDEESLGDEEEEEEEEEEEVL) are enriched in acidic residues.

This sequence belongs to the TRIM/RBCC family. As to quaternary structure, interacts with TBK1; this interaction bridges together TBK1 and NEMO in order to activate TBK1. Interacts with INCA1. Post-translationally, autoubiquitinates upon viral infection. In turn, autoubiquitinated TRIM26 recruits NEMO and bridges TBK1-NEMO interaction.

It is found in the cytoplasm. It localises to the nucleus. The catalysed reaction is S-ubiquitinyl-[E2 ubiquitin-conjugating enzyme]-L-cysteine + [acceptor protein]-L-lysine = [E2 ubiquitin-conjugating enzyme]-L-cysteine + N(6)-ubiquitinyl-[acceptor protein]-L-lysine.. E3 ubiquitin-protein ligase which regulates the IFN-beta production and antiviral response downstream of various DNA-encoded pattern-recognition receptors (PRRs). Also plays a central role in determining the response to different forms of oxidative stress by controlling levels of DNA glycosylases NEIL1, NEIL3 and NTH1 that are involved in repair of damaged DNA. Promotes nuclear IRF3 ubiquitination and proteasomal degradation. Bridges together TBK1 and NEMO during the innate response to viral infection leading to the activation of TBK1. Positively regulates LPS-mediated inflammatory innate immune response by catalyzing the 'Lys-11'-linked polyubiquitination of TAB1 to enhance its activation and subsequent NF-kappa-B and MAPK signaling. In a manner independent of its catalytic activity, inhibits WWP2, a SOX2-directed E3 ubiquitin ligase, and thus protects SOX2 from polyubiquitination and proteasomal degradation. Ubiquitinates the histone acetyltransferase protein complex component PHF20 and thereby triggers its degradation in the nucleus after its recruitment by the histone demethylase KDM6B, serving as a scaffold protein. Upon induction by TGF-beta, ubiquitinates the TFIID component TAF7 for proteasomal degradation. Induces ferroptosis by ubiquitinating SLC7A11, a critical protein for lipid reactive oxygen species (ROS) scavenging. Inhibits directly hepatitis B virus replication by mediating HBX ubiquitination and subsequent degradation. In terms of biological role, (Microbial infection) Promotes herpes simplex virus type 2/HHV-2 infection in vaginal epithelial cells by decreasing the nuclear localization of IRF3, the primary mediator of type I interferon activation. The protein is Tripartite motif-containing protein 26 (TRIM26) of Homo sapiens (Human).